The chain runs to 126 residues: Large ribosomal subunit protein bL12 (126 aa).

The protein belongs to the bacterial ribosomal protein bL12 family. As to quaternary structure, homodimer. Part of the ribosomal stalk of the 50S ribosomal subunit. Forms a multimeric L10(L12)X complex, where L10 forms an elongated spine to which 2 to 4 L12 dimers bind in a sequential fashion. Binds GTP-bound translation factors.

Its function is as follows. Forms part of the ribosomal stalk which helps the ribosome interact with GTP-bound translation factors. Is thus essential for accurate translation. This Prosthecochloris aestuarii (strain DSM 271 / SK 413) protein is Large ribosomal subunit protein bL12.